Reading from the N-terminus, the 417-residue chain is NADH-quinone oxidoreductase subunit D (417 aa).

The protein belongs to the complex I 49 kDa subunit family. In terms of assembly, NDH-1 is composed of 14 different subunits. Subunits NuoB, C, D, E, F, and G constitute the peripheral sector of the complex.

The protein resides in the cell inner membrane. The enzyme catalyses a quinone + NADH + 5 H(+)(in) = a quinol + NAD(+) + 4 H(+)(out). Functionally, NDH-1 shuttles electrons from NADH, via FMN and iron-sulfur (Fe-S) centers, to quinones in the respiratory chain. The immediate electron acceptor for the enzyme in this species is believed to be ubiquinone. Couples the redox reaction to proton translocation (for every two electrons transferred, four hydrogen ions are translocated across the cytoplasmic membrane), and thus conserves the redox energy in a proton gradient. This Alkalilimnicola ehrlichii (strain ATCC BAA-1101 / DSM 17681 / MLHE-1) protein is NADH-quinone oxidoreductase subunit D.